The following is an 870-amino-acid chain: DNA mismatch repair protein MutS (870 aa).

622–629 provides a ligand contact to ATP; that stretch reads GPNMGGKS.

The protein belongs to the DNA mismatch repair MutS family.

In terms of biological role, this protein is involved in the repair of mismatches in DNA. It is possible that it carries out the mismatch recognition step. This protein has a weak ATPase activity. In Methylibium petroleiphilum (strain ATCC BAA-1232 / LMG 22953 / PM1), this protein is DNA mismatch repair protein MutS.